Here is a 240-residue protein sequence, read N- to C-terminus: uncharacterized protein (240 aa).

The next 2 helical transmembrane spans lie at 16-36 (AVFF…YFIP) and 67-87 (FITA…VIAM).

Its subcellular location is the cell membrane. This is an uncharacterized protein from Bacillus subtilis (strain 168).